The primary structure comprises 883 residues: Valine--tRNA ligase (883 aa).

The 'HIGH' region motif lies at 46 to 56; it reads PNVTGKLHLGH. A 'KMSKS' region motif is present at residues 520–524; that stretch reads KMSKS. K523 contributes to the ATP binding site. Positions 809-844 form a coiled coil; the sequence is LVDLLNVEEELARLEKELAKWQKELDMVGKKLSNER.

Belongs to the class-I aminoacyl-tRNA synthetase family. ValS type 1 subfamily. As to quaternary structure, monomer.

The protein resides in the cytoplasm. It catalyses the reaction tRNA(Val) + L-valine + ATP = L-valyl-tRNA(Val) + AMP + diphosphate. Functionally, catalyzes the attachment of valine to tRNA(Val). As ValRS can inadvertently accommodate and process structurally similar amino acids such as threonine, to avoid such errors, it has a 'posttransfer' editing activity that hydrolyzes mischarged Thr-tRNA(Val) in a tRNA-dependent manner. In Streptococcus pneumoniae (strain ATCC BAA-255 / R6), this protein is Valine--tRNA ligase.